The chain runs to 558 residues: Potassium-transporting ATPase potassium-binding subunit (558 aa).

Transmembrane regions (helical) follow at residues 1–21 (MDTL…VLIH), 59–79 (PAYL…VYGL), 85–105 (FLPY…NTAV), 130–150 (GLAV…IALV), 179–199 (LSLV…FAGF), 245–265 (PTAW…FSLP), 279–299 (TAIV…LTIF), 374–394 (GLYG…LLVG), 416–436 (ILVT…IPAV), 484–504 (ALGV…LALA), and 527–547 (FVGL…FPVL).

Belongs to the KdpA family. The system is composed of three essential subunits: KdpA, KdpB and KdpC.

It is found in the cell membrane. Functionally, part of the high-affinity ATP-driven potassium transport (or Kdp) system, which catalyzes the hydrolysis of ATP coupled with the electrogenic transport of potassium into the cytoplasm. This subunit binds the extracellular potassium ions and delivers the ions to the membrane domain of KdpB through an intramembrane tunnel. In Clavibacter michiganensis subsp. michiganensis (strain NCPPB 382), this protein is Potassium-transporting ATPase potassium-binding subunit.